The chain runs to 132 residues: Large ribosomal subunit protein bL12 (132 aa).

The protein belongs to the bacterial ribosomal protein bL12 family. Homodimer. Part of the ribosomal stalk of the 50S ribosomal subunit. Forms a multimeric L10(L12)X complex, where L10 forms an elongated spine to which 2 to 4 L12 dimers bind in a sequential fashion. Binds GTP-bound translation factors.

Its function is as follows. Forms part of the ribosomal stalk which helps the ribosome interact with GTP-bound translation factors. Is thus essential for accurate translation. The protein is Large ribosomal subunit protein bL12 of Ehrlichia canis (strain Jake).